Reading from the N-terminus, the 663-residue chain is DNA ligase (663 aa).

Residues 34–38, 83–84, and E114 contribute to the NAD(+) site; these read DYEYD and SL. The active-site N6-AMP-lysine intermediate is the K116. The NAD(+) site is built by R137, E171, K286, and K310. Residues C404, C407, C422, and C427 each coordinate Zn(2+). One can recognise a BRCT domain in the interval 585–663; that stretch reads TVESPLTGKN…ADEFIKLANG (79 aa).

This sequence belongs to the NAD-dependent DNA ligase family. LigA subfamily. The cofactor is Mg(2+). It depends on Mn(2+) as a cofactor.

It catalyses the reaction NAD(+) + (deoxyribonucleotide)n-3'-hydroxyl + 5'-phospho-(deoxyribonucleotide)m = (deoxyribonucleotide)n+m + AMP + beta-nicotinamide D-nucleotide.. Its function is as follows. DNA ligase that catalyzes the formation of phosphodiester linkages between 5'-phosphoryl and 3'-hydroxyl groups in double-stranded DNA using NAD as a coenzyme and as the energy source for the reaction. It is essential for DNA replication and repair of damaged DNA. This Brachyspira hyodysenteriae (strain ATCC 49526 / WA1) protein is DNA ligase.